The primary structure comprises 142 residues: Protein archease (142 aa).

Ca(2+) contacts are provided by Asp12, Asp141, and Ile142.

Belongs to the archease family.

Activates the tRNA-splicing ligase complex by facilitating the enzymatic turnover of catalytic subunit RtcB. Acts by promoting the guanylylation of RtcB, a key intermediate step in tRNA ligation. Can also alter the NTP specificity of RtcB such that ATP, dGTP or ITP is used efficiently. The sequence is that of Protein archease from Pyrococcus furiosus (strain ATCC 43587 / DSM 3638 / JCM 8422 / Vc1).